Here is a 199-residue protein sequence, read N- to C-terminus: MKITALLVLKCAPEASDPVILSNASDVSHFGYFQRSSVKEFVVFVGRTVASRTPPSQRQSVQHEEYKVHAYNRNGLCAVGFMDDHYPVRSAFSLLNQVLDEYQKSFGESWRSAKEDSNQPWPYLTEALNKFQDPAEADKLLKIQRELDETKIILHKTIDSVLARGEKLDSLVEKSSDLSMASQMFYKQAKKTNSCCTIL.

Residues 7-133 (LVLKCAPEAS…LTEALNKFQD (127 aa)) form the Longin domain. Residues 139–199 (KLLKIQRELD…KKTNSCCTIL (61 aa)) enclose the v-SNARE coiled-coil homology domain. Cysteine 195 carries S-palmitoyl cysteine lipidation. At cysteine 196 the chain carries Cysteine methyl ester. A lipid anchor (S-geranylgeranyl cysteine) is attached at cysteine 196. Positions 197–199 (TIL) are cleaved as a propeptide — removed in mature form.

Belongs to the synaptobrevin family. As to quaternary structure, interacts with SYP41. Core constituent of the SNARE complex required for membrane fusion at the trans-Golgi network. As to expression, expressed ubiquitously in roots, stems, flowers and leaves.

It localises to the cell membrane. Its function is as follows. May be involved in the secretory pathway. Essential for membrane fusion mediated by either SYP41 or SYP61; triggers the fusion of phospholipid vesicles containing SYP41 or SYP61 and VTI12. This chain is VAMP-like protein YKT61, found in Arabidopsis thaliana (Mouse-ear cress).